Consider the following 385-residue polypeptide: Flap endonuclease 1 (385 aa).

Residues 1–104 are N-domain; sequence MGILGLSKLI…GELAKRAERR (104 aa). A Mg(2+)-binding site is contributed by aspartate 34. Residues arginine 47 and arginine 70 each contribute to the DNA site. Mg(2+) contacts are provided by aspartate 86, glutamate 158, glutamate 160, aspartate 179, and aspartate 181. An I-domain region spans residues 122–253; it reads GIEKFNRRLV…KRAIELINTY (132 aa). DNA is bound at residue glutamate 158. 2 residues coordinate DNA: glycine 231 and aspartate 233. Mg(2+) is bound at residue aspartate 233. Positions 336 to 344 are interaction with PCNA; that stretch reads TQVRLDSFF. The interval 346-385 is disordered; sequence TLPSTPNATNAAKRKAEEAKKSANNKKAKTSGGGRGRRPK. Over residues 368–385 the composition is skewed to basic residues; that stretch reads ANNKKAKTSGGGRGRRPK.

It belongs to the XPG/RAD2 endonuclease family. FEN1 subfamily. In terms of assembly, interacts with PCNA. Three molecules of FEN1 bind to one PCNA trimer with each molecule binding to one PCNA monomer. PCNA stimulates the nuclease activity without altering cleavage specificity. Mg(2+) is required as a cofactor. In terms of processing, phosphorylated. Phosphorylation upon DNA damage induces relocalization to the nuclear plasma.

The protein resides in the nucleus. It is found in the nucleolus. It localises to the nucleoplasm. The protein localises to the mitochondrion. Functionally, structure-specific nuclease with 5'-flap endonuclease and 5'-3' exonuclease activities involved in DNA replication and repair. During DNA replication, cleaves the 5'-overhanging flap structure that is generated by displacement synthesis when DNA polymerase encounters the 5'-end of a downstream Okazaki fragment. It enters the flap from the 5'-end and then tracks to cleave the flap base, leaving a nick for ligation. Also involved in the long patch base excision repair (LP-BER) pathway, by cleaving within the apurinic/apyrimidinic (AP) site-terminated flap. Acts as a genome stabilization factor that prevents flaps from equilibrating into structures that lead to duplications and deletions. Also possesses 5'-3' exonuclease activity on nicked or gapped double-stranded DNA, and exhibits RNase H activity. Also involved in replication and repair of rDNA and in repairing mitochondrial DNA. The sequence is that of Flap endonuclease 1 from Drosophila simulans (Fruit fly).